Here is a 38-residue protein sequence, read N- to C-terminus: Large ribosomal subunit protein bL36 (38 aa).

This sequence belongs to the bacterial ribosomal protein bL36 family.

The chain is Large ribosomal subunit protein bL36 from Wigglesworthia glossinidia brevipalpis.